Consider the following 866-residue polypeptide: Putative linoleate 9S-lipoxygenase 3 (866 aa).

The PLAT domain maps to N33–A161. Residues A164 to I866 enclose the Lipoxygenase domain. Residues Y206–L250 are disordered. Residues H521, H526, H712, N716, and I866 each contribute to the Fe cation site.

It belongs to the lipoxygenase family. It depends on Fe cation as a cofactor.

The enzyme catalyses (9Z,12Z)-octadecadienoate + O2 = (9S)-hydroperoxy-(10E,12Z)-octadecadienoate. The protein operates within lipid metabolism; oxylipin biosynthesis. Plant lipoxygenase may be involved in a number of diverse aspects of plant physiology including growth and development, pest resistance, and senescence or responses to wounding. Catalyzes the hydroperoxidation of lipids containing a cis,cis-1,4-pentadiene structure. The protein is Putative linoleate 9S-lipoxygenase 3 of Oryza sativa subsp. japonica (Rice).